We begin with the raw amino-acid sequence, 357 residues long: 3-isopropylmalate dehydrogenase (357 aa).

75-88 (GPKWDTLPPAERPE) serves as a coordination point for NAD(+). Substrate contacts are provided by Arg-96, Arg-106, Arg-134, and Asp-222. Residues Asp-222, Asp-246, and Asp-250 each coordinate Mg(2+). 279-291 (GSAPDIAGQQKAN) lines the NAD(+) pocket.

It belongs to the isocitrate and isopropylmalate dehydrogenases family. LeuB type 1 subfamily. Homodimer. Mg(2+) is required as a cofactor. The cofactor is Mn(2+).

The protein resides in the cytoplasm. It catalyses the reaction (2R,3S)-3-isopropylmalate + NAD(+) = 4-methyl-2-oxopentanoate + CO2 + NADH. It functions in the pathway amino-acid biosynthesis; L-leucine biosynthesis; L-leucine from 3-methyl-2-oxobutanoate: step 3/4. Functionally, catalyzes the oxidation of 3-carboxy-2-hydroxy-4-methylpentanoate (3-isopropylmalate) to 3-carboxy-4-methyl-2-oxopentanoate. The product decarboxylates to 4-methyl-2 oxopentanoate. The chain is 3-isopropylmalate dehydrogenase from Moorella thermoacetica (strain ATCC 39073 / JCM 9320).